A 481-amino-acid chain; its full sequence is Serralysin B (481 aa).

A propeptide spanning residues 1-15 (MQQNEKASLNTSAAA) is cleaved from the precursor. His189 serves as a coordination point for Zn(2+). Glu190 is an active-site residue. Zn(2+) is bound by residues His193 and Tyr230. Ca(2+) contacts are provided by Arg267, Gly269, Thr271, Asp299, Gly301, Gly302, Asp304, Thr341, Glu343, Gly348, Gly350, Asp352, Asn357, Ala359, Asn361, Gly365, Gly366, Ala367, Gly368, Asp370, Gly374, Gly377, Asp379, Gly383, Gly384, Ala385, Gly386, Asp388, Asp397, Asp404, and Asp414. Hemolysin-type calcium-binding repeat units lie at residues 346-363 (IGGS…DNIL), 364-381 (QGGA…ADTL), and 382-399 (TGGA…QDST).

Belongs to the peptidase M10B family. It depends on Ca(2+) as a cofactor. Zn(2+) is required as a cofactor.

It localises to the secreted. The catalysed reaction is Preferential cleavage of bonds with hydrophobic residues in P1'.. This chain is Serralysin B (prtB), found in Dickeya chrysanthemi (Pectobacterium chrysanthemi).